Here is a 1093-residue protein sequence, read N- to C-terminus: Protein AF-17 (1093 aa).

The PHD-type 1 zinc-finger motif lies at 5–57 (VGGCCVCSDERGWAENPLVYCDGHACSVAVHQACYGIVQVPTGPWFCRKCESQ). The C2HC pre-PHD-type zinc finger occupies 62 to 95 (RVRCELCPHKDGALKRTDNGGWAHVVCALYIPEV). The PHD-type 2 zinc-finger motif lies at 118–181 (KTCYICEEQG…KYCGYCKYHF (64 aa)). The disordered stretch occupies residues 185-500 (KTSRHSSGGG…GGPAAPSLPS (316 aa)). The segment covering 191 to 212 (SGGGGGGAGGGGGSMGGGGSGF) has biased composition (gly residues). The segment covering 231 to 255 (PTHHERGQKKSRKDKERLKQKHKKR) has biased composition (basic residues). Serine 258 is modified (phosphoserine). Positions 258–268 (SPPSILTPPVV) are enriched in pro residues. Basic and acidic residues predominate over residues 282–300 (SHHEASTQETSESSRESKG). Basic residues predominate over residues 301 to 316 (KKSSSHSLSHKGKKLS). Residues 317 to 340 (SGKGVSSFTSASSSSSSSSSSSGG) show a composition bias toward low complexity. The segment covering 345 to 354 (AVSSLQSSPD) has biased composition (polar residues). The span at 374–388 (APAPSAPPSPSAPEP) shows a compositional bias: pro residues. Phosphoserine is present on residues serine 378 and serine 423. A compositionally biased stretch (low complexity) spans 410–425 (STTTSSSGRARAPSPG). Threonine 451 is subject to Phosphothreonine. Residues 465 to 484 (EKKHKASKRSRHGPGRPKGS) show a composition bias toward basic residues. The leucine-zipper stretch occupies residues 729–764 (LQKENQRLQEQILSLTAKKERLQILNVQLSVPFPAL). Disordered regions lie at residues 775–871 (VPGP…RAPG) and 1060–1093 (QTNP…QEKG). A compositionally biased stretch (low complexity) spans 787-796 (SSDSLSTSKS). Residues 804–813 (GLDNSLSTSS) are compositionally biased toward polar residues. Composition is skewed to low complexity over residues 818–832 (SGCP…SFHS) and 839–853 (LLQQ…ALPG).

Interacts with histone H3; interaction is necessary for MLLT6 binding to nucleosomes; interaction is inhibited by histone H3 'Lys-27' methylations (H3K27me1, H3K27me2 and H3K27me3).

The protein resides in the nucleus. The chain is Protein AF-17 (MLLT6) from Homo sapiens (Human).